A 150-amino-acid polypeptide reads, in one-letter code: Cytochrome c oxidase subunit 5A, mitochondrial (150 aa).

The transit peptide at M1–Y41 directs the protein to the mitochondrion. The SIFI-degron signature appears at L2–A17. 2 positions are modified to N6-acetyllysine: K87 and K113. Phosphothreonine is present on T141.

Belongs to the cytochrome c oxidase subunit 5A family. In terms of assembly, component of the cytochrome c oxidase (complex IV, CIV), a multisubunit enzyme composed of 14 subunits. The complex is composed of a catalytic core of 3 subunits MT-CO1, MT-CO2 and MT-CO3, encoded in the mitochondrial DNA, and 11 supernumerary subunits COX4I, COX5A, COX5B, COX6A, COX6B, COX6C, COX7A, COX7B, COX7C, COX8 and NDUFA4, which are encoded in the nuclear genome. The complex exists as a monomer or a dimer and forms supercomplexes (SCs) in the inner mitochondrial membrane with NADH-ubiquinone oxidoreductase (complex I, CI) and ubiquinol-cytochrome c oxidoreductase (cytochrome b-c1 complex, complex III, CIII), resulting in different assemblies (supercomplex SCI(1)III(2)IV(1) and megacomplex MCI(2)III(2)IV(2)). Interacts with AFG1L. Interacts with RAB5IF. Post-translationally, in response to mitochondrial stress, the precursor protein is ubiquitinated by the SIFI complex in the cytoplasm before mitochondrial import, leading to its degradation. Within the SIFI complex, UBR4 initiates ubiquitin chain that are further elongated or branched by KCMF1.

The protein resides in the mitochondrion inner membrane. It participates in energy metabolism; oxidative phosphorylation. Functionally, component of the cytochrome c oxidase, the last enzyme in the mitochondrial electron transport chain which drives oxidative phosphorylation. The respiratory chain contains 3 multisubunit complexes succinate dehydrogenase (complex II, CII), ubiquinol-cytochrome c oxidoreductase (cytochrome b-c1 complex, complex III, CIII) and cytochrome c oxidase (complex IV, CIV), that cooperate to transfer electrons derived from NADH and succinate to molecular oxygen, creating an electrochemical gradient over the inner membrane that drives transmembrane transport and the ATP synthase. Cytochrome c oxidase is the component of the respiratory chain that catalyzes the reduction of oxygen to water. Electrons originating from reduced cytochrome c in the intermembrane space (IMS) are transferred via the dinuclear copper A center (CU(A)) of subunit 2 and heme A of subunit 1 to the active site in subunit 1, a binuclear center (BNC) formed by heme A3 and copper B (CU(B)). The BNC reduces molecular oxygen to 2 water molecules using 4 electrons from cytochrome c in the IMS and 4 protons from the mitochondrial matrix. This chain is Cytochrome c oxidase subunit 5A, mitochondrial (COX5A), found in Cebuella pygmaea (Pygmy marmoset).